Consider the following 139-residue polypeptide: Translation initiation factor 5A (139 aa).

Lysine 36 carries the hypusine modification.

Belongs to the eIF-5A family.

It is found in the cytoplasm. In terms of biological role, functions by promoting the formation of the first peptide bond. This Aeropyrum pernix (strain ATCC 700893 / DSM 11879 / JCM 9820 / NBRC 100138 / K1) protein is Translation initiation factor 5A (eif5a).